The chain runs to 385 residues: 1-deoxy-D-xylulose 5-phosphate reductoisomerase (385 aa).

Residues threonine 11, glycine 12, serine 13, isoleucine 14, asparagine 39, and asparagine 123 each contribute to the NADPH site. Lysine 124 lines the 1-deoxy-D-xylulose 5-phosphate pocket. An NADPH-binding site is contributed by glutamate 125. Mn(2+) is bound at residue aspartate 149. 1-deoxy-D-xylulose 5-phosphate-binding residues include serine 150, glutamate 151, serine 174, and histidine 197. Position 151 (glutamate 151) interacts with Mn(2+). Glycine 203 serves as a coordination point for NADPH. 1-deoxy-D-xylulose 5-phosphate-binding residues include serine 210, asparagine 215, lysine 216, and glutamate 219. Glutamate 219 is a Mn(2+) binding site.

It belongs to the DXR family. Mg(2+) is required as a cofactor. It depends on Mn(2+) as a cofactor.

It carries out the reaction 2-C-methyl-D-erythritol 4-phosphate + NADP(+) = 1-deoxy-D-xylulose 5-phosphate + NADPH + H(+). It functions in the pathway isoprenoid biosynthesis; isopentenyl diphosphate biosynthesis via DXP pathway; isopentenyl diphosphate from 1-deoxy-D-xylulose 5-phosphate: step 1/6. In terms of biological role, catalyzes the NADPH-dependent rearrangement and reduction of 1-deoxy-D-xylulose-5-phosphate (DXP) to 2-C-methyl-D-erythritol 4-phosphate (MEP). The sequence is that of 1-deoxy-D-xylulose 5-phosphate reductoisomerase from Porphyromonas gingivalis (strain ATCC 33277 / DSM 20709 / CIP 103683 / JCM 12257 / NCTC 11834 / 2561).